Reading from the N-terminus, the 283-residue chain is MNDSQRVSILSEALPYIQSFSGRKIVIKYGGSVMEDDDLKNAFFRDIALLSTVGVCPIVIHGGGPEINNWLKKLEISPKFENGLRITDQKTMEIVEMVLMGRVNKQIVKGINKTGSLAVGISGLDGNLIQSRELGDGSHGLVGEVTKINPEILDPLISKGYIPIISSIGSTVEGISHNINADFVAGEIAAAISAEKLILLTDTQGILKEKDNKNSLVEKTNLKEARDLIDKKIVTEGMIPKTECCIRALAQGVKAAHIIDGRVQHSLLLEIFTNTGIGTMIVA.

Residues 63-64, Arg85, and Asn178 contribute to the substrate site; that span reads GG.

The protein belongs to the acetylglutamate kinase family. ArgB subfamily.

It is found in the cytoplasm. It catalyses the reaction N-acetyl-L-glutamate + ATP = N-acetyl-L-glutamyl 5-phosphate + ADP. It participates in amino-acid biosynthesis; L-arginine biosynthesis; N(2)-acetyl-L-ornithine from L-glutamate: step 2/4. Catalyzes the ATP-dependent phosphorylation of N-acetyl-L-glutamate. The sequence is that of Acetylglutamate kinase from Prochlorococcus marinus (strain MIT 9301).